The chain runs to 377 residues: tRNA-specific 2-thiouridylase MnmA (377 aa).

ATP is bound by residues 16 to 23 (GMSGGVDS) and methionine 42. Residues 102 to 104 (NPD) form an interaction with target base in tRNA region. Cysteine 107 functions as the Nucleophile in the catalytic mechanism. Cysteine 107 and cysteine 204 are oxidised to a cystine. Position 131 (glycine 131) interacts with ATP. Residues 154-156 (KDQ) form an interaction with tRNA region. Cysteine 204 serves as the catalytic Cysteine persulfide intermediate. Residues 315–316 (RY) are interaction with tRNA.

This sequence belongs to the MnmA/TRMU family.

The protein resides in the cytoplasm. The catalysed reaction is S-sulfanyl-L-cysteinyl-[protein] + uridine(34) in tRNA + AH2 + ATP = 2-thiouridine(34) in tRNA + L-cysteinyl-[protein] + A + AMP + diphosphate + H(+). Catalyzes the 2-thiolation of uridine at the wobble position (U34) of tRNA, leading to the formation of s(2)U34. This Lacticaseibacillus paracasei (strain ATCC 334 / BCRC 17002 / CCUG 31169 / CIP 107868 / KCTC 3260 / NRRL B-441) (Lactobacillus paracasei) protein is tRNA-specific 2-thiouridylase MnmA.